A 152-amino-acid polypeptide reads, in one-letter code: 3-dehydroquinate dehydratase (152 aa).

Y22 serves as the catalytic Proton acceptor. Residues N73, H79, and D86 each coordinate substrate. H99 functions as the Proton donor in the catalytic mechanism. Substrate-binding positions include 100–101 (LS) and R110.

The protein belongs to the type-II 3-dehydroquinase family. In terms of assembly, homododecamer.

The catalysed reaction is 3-dehydroquinate = 3-dehydroshikimate + H2O. The protein operates within metabolic intermediate biosynthesis; chorismate biosynthesis; chorismate from D-erythrose 4-phosphate and phosphoenolpyruvate: step 3/7. Functionally, catalyzes a trans-dehydration via an enolate intermediate. The protein is 3-dehydroquinate dehydratase of Gemmatimonas aurantiaca (strain DSM 14586 / JCM 11422 / NBRC 100505 / T-27).